The following is a 353-amino-acid chain: DNA polymerase IV (353 aa).

Residues 14–198 (IIHIDMDAFF…MDISKFHGVG (185 aa)) form the UmuC domain. Mg(2+) is bound by residues D18 and D116. E117 is an active-site residue.

This sequence belongs to the DNA polymerase type-Y family. As to quaternary structure, monomer. Mg(2+) serves as cofactor.

The protein resides in the cytoplasm. It carries out the reaction DNA(n) + a 2'-deoxyribonucleoside 5'-triphosphate = DNA(n+1) + diphosphate. Functionally, poorly processive, error-prone DNA polymerase involved in untargeted mutagenesis. Copies undamaged DNA at stalled replication forks, which arise in vivo from mismatched or misaligned primer ends. These misaligned primers can be extended by PolIV. Exhibits no 3'-5' exonuclease (proofreading) activity. May be involved in translesional synthesis, in conjunction with the beta clamp from PolIII. This is DNA polymerase IV from Streptococcus pneumoniae serotype 2 (strain D39 / NCTC 7466).